The following is a 130-amino-acid chain: Large ribosomal subunit protein bL12c (130 aa).

The protein belongs to the bacterial ribosomal protein bL12 family. Homodimer. Part of the ribosomal stalk of the 50S ribosomal subunit. Forms a multimeric L10(L12)X complex, where L10 forms an elongated spine to which 2 to 4 L12 dimers bind in a sequential fashion. Binds GTP-bound translation factors.

It localises to the plastid. Forms part of the ribosomal stalk which helps the ribosome interact with GTP-bound translation factors. Is thus essential for accurate translation. This is Large ribosomal subunit protein bL12c from Prototheca wickerhamii.